Here is a 696-residue protein sequence, read N- to C-terminus: UvrABC system protein C (696 aa).

Positions 16–95 (TEPGVYKFRD…IKRFDPRFNV (80 aa)) constitute a GIY-YIG domain. One can recognise a UVR domain in the interval 208–243 (DKVTRKLNADMMAAAEELDFERAARLRDDLEAIDKV).

Belongs to the UvrC family. As to quaternary structure, interacts with UvrB in an incision complex.

The protein resides in the cytoplasm. Functionally, the UvrABC repair system catalyzes the recognition and processing of DNA lesions. UvrC both incises the 5' and 3' sides of the lesion. The N-terminal half is responsible for the 3' incision and the C-terminal half is responsible for the 5' incision. In Corynebacterium glutamicum (strain R), this protein is UvrABC system protein C.